A 144-amino-acid polypeptide reads, in one-letter code: Large ribosomal subunit protein uL16 (144 aa).

The protein belongs to the universal ribosomal protein uL16 family. Part of the 50S ribosomal subunit.

In terms of biological role, binds 23S rRNA and is also seen to make contacts with the A and possibly P site tRNAs. The sequence is that of Large ribosomal subunit protein uL16 from Lysinibacillus sphaericus (strain C3-41).